A 1028-amino-acid chain; its full sequence is Isoleucine--tRNA ligase (1028 aa).

The 'HIGH' region motif lies at 51-61; it reads PTANGRPHIGH. The 'KMSKS' region motif lies at 591–595; it reads KMSKS. Lysine 594 lines the ATP pocket.

Belongs to the class-I aminoacyl-tRNA synthetase family. IleS type 2 subfamily. As to quaternary structure, monomer. Zn(2+) serves as cofactor.

The protein localises to the cytoplasm. It carries out the reaction tRNA(Ile) + L-isoleucine + ATP = L-isoleucyl-tRNA(Ile) + AMP + diphosphate. Functionally, catalyzes the attachment of isoleucine to tRNA(Ile). As IleRS can inadvertently accommodate and process structurally similar amino acids such as valine, to avoid such errors it has two additional distinct tRNA(Ile)-dependent editing activities. One activity is designated as 'pretransfer' editing and involves the hydrolysis of activated Val-AMP. The other activity is designated 'posttransfer' editing and involves deacylation of mischarged Val-tRNA(Ile). In Thermoplasma volcanium (strain ATCC 51530 / DSM 4299 / JCM 9571 / NBRC 15438 / GSS1), this protein is Isoleucine--tRNA ligase.